Here is a 247-residue protein sequence, read N- to C-terminus: 14-3-3 protein gamma-1 (247 aa).

Belongs to the 14-3-3 family. In terms of assembly, homodimer, and heterodimer with other family members.

The protein localises to the cytoplasm. In terms of biological role, adapter protein implicated in the regulation of a large spectrum of both general and specialized signaling pathways. Binds to a large number of partners, usually by recognition of a phosphoserine or phosphothreonine motif. Binding generally results in the modulation of the activity of the binding partner. This Danio rerio (Zebrafish) protein is 14-3-3 protein gamma-1 (ywhag1).